The chain runs to 423 residues: Adenylosuccinate synthetase (423 aa).

GTP is bound by residues 12-18 (GDEGKGK) and 40-42 (GHT). Asp-13 acts as the Proton acceptor in catalysis. Asp-13 and Gly-40 together coordinate Mg(2+). IMP-binding positions include 13–16 (DEGK), 38–41 (NAGH), Thr-128, Arg-142, Gln-223, Thr-238, and Arg-302. Catalysis depends on His-41, which acts as the Proton donor. 298–304 (TTTGRPR) is a binding site for substrate. GTP is bound by residues Arg-304, 330–332 (RLD), and 412–414 (CIG).

Belongs to the adenylosuccinate synthetase family. Homodimer. The cofactor is Mg(2+).

The protein resides in the cytoplasm. The enzyme catalyses IMP + L-aspartate + GTP = N(6)-(1,2-dicarboxyethyl)-AMP + GDP + phosphate + 2 H(+). It functions in the pathway purine metabolism; AMP biosynthesis via de novo pathway; AMP from IMP: step 1/2. Its function is as follows. Plays an important role in the de novo pathway of purine nucleotide biosynthesis. Catalyzes the first committed step in the biosynthesis of AMP from IMP. This Dehalococcoides mccartyi (strain ATCC BAA-2266 / KCTC 15142 / 195) (Dehalococcoides ethenogenes (strain 195)) protein is Adenylosuccinate synthetase.